Reading from the N-terminus, the 491-residue chain is Argininosuccinate lyase (491 aa).

This sequence belongs to the lyase 1 family. Argininosuccinate lyase subfamily.

The protein localises to the cytoplasm. It carries out the reaction 2-(N(omega)-L-arginino)succinate = fumarate + L-arginine. It participates in amino-acid biosynthesis; L-arginine biosynthesis; L-arginine from L-ornithine and carbamoyl phosphate: step 3/3. This Methanococcoides burtonii (strain DSM 6242 / NBRC 107633 / OCM 468 / ACE-M) protein is Argininosuccinate lyase.